A 200-amino-acid polypeptide reads, in one-letter code: Sperm acrosome developmental regulator (200 aa).

At Ser63 the chain carries Phosphoserine. The span at 167-183 shows a compositional bias: basic residues; the sequence is QERRRRRRMRSHASHTS. Residues 167 to 200 form a disordered region; that stretch reads QERRRRRRMRSHASHTSRHSESVQGLKHDARSPL. The segment covering 184 to 200 has biased composition (basic and acidic residues); sequence RHSESVQGLKHDARSPL.

It localises to the cytoplasmic vesicle. The protein resides in the secretory vesicle. Its subcellular location is the acrosome. May play an important role in acrosome formation and nucleus shaping during spermiogenesis. This chain is Sperm acrosome developmental regulator (Spacdr), found in Rattus norvegicus (Rat).